Consider the following 74-residue polypeptide: Anaphase-promoting complex subunit 13 (74 aa).

The interval 33-53 (LNELPDPEQDNGGTTESVKEQ) is disordered.

The protein belongs to the APC13 family. The mammalian APC/C is composed at least of 14 distinct subunits ANAPC1, ANAPC2, CDC27/APC3, ANAPC4, ANAPC5, CDC16/APC6, ANAPC7, CDC23/APC8, ANAPC10, ANAPC11, CDC26/APC12, ANAPC13, ANAPC15 and ANAPC16 that assemble into a complex of at least 19 chains with a combined molecular mass of around 1.2 MDa; APC/C interacts with FZR1 and FBXO5.

The protein localises to the nucleus. It functions in the pathway protein modification; protein ubiquitination. In terms of biological role, component of the anaphase promoting complex/cyclosome (APC/C), a cell cycle-regulated E3 ubiquitin ligase that controls progression through mitosis and the G1 phase of the cell cycle. The APC/C complex acts by mediating ubiquitination and subsequent degradation of target proteins: it mainly mediates the formation of 'Lys-11'-linked polyubiquitin chains and, to a lower extent, the formation of 'Lys-48'- and 'Lys-63'-linked polyubiquitin chains. The APC/C complex catalyzes assembly of branched 'Lys-11'-/'Lys-48'-linked branched ubiquitin chains on target proteins. The chain is Anaphase-promoting complex subunit 13 (ANAPC13) from Pongo abelii (Sumatran orangutan).